Consider the following 618-residue polypeptide: DNA mismatch repair protein MutL (618 aa).

A compositionally biased stretch (polar residues) spans 348–359; the sequence is QTDTARSPTGNF. Residues 348-400 form a disordered region; the sequence is QTDTARSPTGNFESGEVFDYPKSQLQPSHSVSSGGASLGSRSAGGSGGAYRAT. The span at 377-388 shows a compositional bias: low complexity; it reads SVSSGGASLGSR.

It belongs to the DNA mismatch repair MutL/HexB family.

This protein is involved in the repair of mismatches in DNA. It is required for dam-dependent methyl-directed DNA mismatch repair. May act as a 'molecular matchmaker', a protein that promotes the formation of a stable complex between two or more DNA-binding proteins in an ATP-dependent manner without itself being part of a final effector complex. This Pseudoalteromonas translucida (strain TAC 125) protein is DNA mismatch repair protein MutL.